The sequence spans 307 residues: tRNA dimethylallyltransferase (307 aa).

An ATP-binding site is contributed by 9-16; the sequence is GPTAVGKT. Residue 11–16 participates in substrate binding; sequence TAVGKT. Residues 34 to 37 are interaction with substrate tRNA; sequence DSMQ.

This sequence belongs to the IPP transferase family. As to quaternary structure, monomer. Mg(2+) is required as a cofactor.

The catalysed reaction is adenosine(37) in tRNA + dimethylallyl diphosphate = N(6)-dimethylallyladenosine(37) in tRNA + diphosphate. Catalyzes the transfer of a dimethylallyl group onto the adenine at position 37 in tRNAs that read codons beginning with uridine, leading to the formation of N6-(dimethylallyl)adenosine (i(6)A). The chain is tRNA dimethylallyltransferase from Limosilactobacillus reuteri (strain DSM 20016) (Lactobacillus reuteri).